The sequence spans 366 residues: ACP-SH:acetate ligase (366 aa).

It is found in the cytoplasm. It carries out the reaction holo-[ACP] + acetate + ATP = acetyl-[ACP] + AMP + diphosphate. Its function is as follows. Acyl-carrier protein (ACP) acetate ligase of the biotin-dependent malonate decarboxylase multienzyme complex (EC 7.2.4.4). Involved in the conversion of the thiol group of the ACP-bound 2'-(5-phosphoribosyl)-3'-dephospho-CoA prosthetic group into its acetyl thioester using the energy from the hydrolysis of ATP. This chain is ACP-SH:acetate ligase (madH), found in Malonomonas rubra.